Consider the following 648-residue polypeptide: Biosynthetic arginine decarboxylase (648 aa).

Lys-109 carries the post-translational modification N6-(pyridoxal phosphate)lysine. Ile-291–Phe-301 provides a ligand contact to substrate.

This sequence belongs to the Orn/Lys/Arg decarboxylase class-II family. SpeA subfamily. The cofactor is Mg(2+). Requires pyridoxal 5'-phosphate as cofactor.

The catalysed reaction is L-arginine + H(+) = agmatine + CO2. It participates in amine and polyamine biosynthesis; agmatine biosynthesis; agmatine from L-arginine: step 1/1. In terms of biological role, catalyzes the biosynthesis of agmatine from arginine. This chain is Biosynthetic arginine decarboxylase, found in Prochlorococcus marinus (strain AS9601).